A 757-amino-acid polypeptide reads, in one-letter code: Transcription regulator rua1 (757 aa).

Disordered stretches follow at residues S122 to S169, N181 to D218, R237 to T295, S372 to L393, and M422 to A582. The span at S125–G165 shows a compositional bias: low complexity. 2 stretches are compositionally biased toward polar residues: residues N181–S190 and Q200–D218. Basic residues predominate over residues G240–K249. Polar residues predominate over residues L253–H277. Over residues P379–L393 the composition is skewed to pro residues. A compositionally biased stretch (polar residues) spans P428–R437. Residues S439 to S453 are compositionally biased toward basic residues. Composition is skewed to low complexity over residues R454–A465, A494–A510, and T543–A582. The segment at R661 to S692 adopts a C2H2-type 1 degenerate zinc-finger fold. The C2H2-type 2; degenerate zinc-finger motif lies at G717 to R750.

It localises to the nucleus. In terms of biological role, transcription factor; part of the gene cluster that mediates the biosynthesis of the glycolipid biosurfactant ustilagic acid (UA). UA is a secreted cellobiose glycolipid that is toxic for many microorganisms and confers biocontrol activity to U.maydis. Recognizes and binds to the specific 5'-T/G-G/T-C-G-C-A-T-A/T-C/T-C/T-G/A-3' upstream activating sequence found in all promoters of the UA biosynthesis genes. In Mycosarcoma maydis (Corn smut fungus), this protein is Transcription regulator rua1.